Consider the following 316-residue polypeptide: Calumenin-B (316 aa).

A signal peptide spans 1-19 (MELRPLVMCFALCVVYASS). EF-hand domains follow at residues 69–104 (ESKERLGMLVERIDEDKDGYVSVEEMKKWIKHSQKR), 105–140 (WIYDDVDRQWKGHDHNGDGLVSWEEYKNATYGYILD), 152–187 (QMISRDERRFKMSDLDADLKANKEEFTAFLHPEEYD), 189–224 (MKDIVVLETMEDIDKNGDGFIDLEEYIGDMYNQEGD), 230–265 (WVRTEREQFTEFRDTNKDGRMDKEETKDWILPSDYD), and 266–301 (HAEAEAKHLVYESDNDKDGKLTKAEIVEKYDLFVGS). Positions 82, 84, 86, 88, 93, 118, 120, 122, and 129 each coordinate Ca(2+). Residue N132 is glycosylated (N-linked (GlcNAc...) asparagine). Ca(2+)-binding residues include D165, D167, D169, K171, E176, D202, N204, D206, E213, D243, N245, D247, R249, E254, D279, D281, D283, K285, and E290. Residues 313-316 (HDEF) carry the Prevents secretion from ER motif.

Belongs to the CREC family. As to quaternary structure, interacts with ggcx.

It is found in the endoplasmic reticulum membrane. The protein resides in the golgi apparatus. It localises to the secreted. Its subcellular location is the melanosome. The protein localises to the sarcoplasmic reticulum lumen. Functionally, involved in regulation of vitamin K-dependent carboxylation of multiple N-terminal glutamate residues. Seems to inhibit gamma-carboxylase ggcx. Binds 7 calcium ions with a low affinity. The chain is Calumenin-B (calub) from Salmo salar (Atlantic salmon).